Consider the following 255-residue polypeptide: Glioma pathogenesis-related protein 1 (255 aa).

The signal sequence occupies residues 1-17 (MQVILAVIVWMASSVSS). In terms of domain architecture, SCP spans 39-164 (QVHNQLRSKV…PNGANFICDY (126 aa)). Residues 224–244 (SLFLIAKSVLLLLSVIITIWV) form a helical membrane-spanning segment.

This sequence belongs to the CRISP family.

The protein localises to the membrane. The chain is Glioma pathogenesis-related protein 1 (Glipr1) from Mus musculus (Mouse).